Reading from the N-terminus, the 320-residue chain is UV DNA damage endonuclease (320 aa).

Belongs to the uve1/UvsE family.

In terms of biological role, component in a DNA repair pathway. Removal of UV LIGHT damaged nucleotides. Recognizes pyrimidine dimers and cleave a phosphodiester bond immediately 5' to the lesion. The sequence is that of UV DNA damage endonuclease from Bacillus pumilus (strain SAFR-032).